The following is a 343-amino-acid chain: NAC domain-containing protein 4 (343 aa).

An NAC domain is found at 12 to 168 (LPPGFRFHPT…EWVLCRVFKK (157 aa)). A DNA-binding region spans residues 109–174 (VGMKKTLVFY…VFKKSLVEVG (66 aa)). Residues 304–333 (GGERERLSASQDTGLTSDVNPEISSSSGQK) form a disordered region. A compositionally biased stretch (polar residues) spans 311 to 332 (SASQDTGLTSDVNPEISSSSGQ).

In terms of tissue distribution, expressed in roots, tiller buds, stems, leaves, lamina joints and the young husks. Expressed in embryos, coleoptiles, radicles, leaf pulvinus, ligules, panicles, palea and lemma, anthers, and the internode of the peduncles. Expressed in young leaves, root meristems, florescence meristems and young spikelets.

It localises to the nucleus. Functionally, transcription factor involved in the regulation of tiller bud outgrowth, but does not seem to regulate tiller bud initiation. Possesses transactivation activity in yeast. Involved in the regulation of plant architecture and grain yield. Acts as a negative regulator of plant height and flowering time. Regulates directly key genes of the gibberellin (GA) pathway by binding to their promoters. Positively regulates leaf senescence in an age-dependent manner. Activates directly the expression of the chlorophyll degradation genes SGR and NYC3. Positively regulates the level of abscisic acid (ABA) by directly up-regulating the expression of the ABA biosynthetic genes NCED3 and ZEP, and down-regulating the ABA catabolic gene CYP707A5/ABA8OX1. Promotes salt-induced cell death accompanied by the loss of plasma membrane integrity, nuclear DNA fragmentation, and changes of caspase-like activity. Targets genes that encoded a reactive oxygen species (ROS) scavenger COX11 and a caspase-like protease AP37. Activates the potassium efflux channels GORK and SKOR. Acts as a positive regulator of drought and salt tolerance through ABA-mediated pathways. Acts as a negative regulator of root growth. Functions as an upstream integrator of auxin and cytokinin signals that affect CROWN ROOTLESS (CRL) and cyclin-dependent protein kinase (CDK) genes to regulate cell division during root development. Binds directly to the promoters of the auxin inactivation-related genes GH3.6 and GH3.8, the auxin signaling-related gene ARF25, and the cytokinin oxidase gene CKX4. Activates directly the expressions of the 1-aminocyclopropane-1-carboxylate oxidase genes ACO1 and ACO3, enhancing ethylene synthesis, and then retarding seedling establishment. This is NAC domain-containing protein 4 from Oryza sativa subsp. japonica (Rice).